We begin with the raw amino-acid sequence, 569 residues long: Undecaprenyl phosphate-alpha-4-amino-4-deoxy-L-arabinose arabinosyl transferase 1 (569 aa).

A run of 12 helical transmembrane segments spans residues 27–47, 98–120, 129–149, 151–171, 194–214, 225–245, 275–295, 311–331, 334–354, 366–386, 396–416, and 420–440; these read GLIL…GLWI, LFGV…YLLA, INAA…QAGY, NLDP…WFAI, LMTK…PYML, YGLV…LAVH, PWWF…LLLP, AYLA…SGKL, YIMP…VKWL, GVFN…LQAT, FSLS…ALQV, and LTLW…LPAA.

Belongs to the glycosyltransferase 83 family.

Its subcellular location is the cell inner membrane. It carries out the reaction 4-amino-4-deoxy-alpha-L-arabinopyranosyl di-trans,octa-cis-undecaprenyl phosphate + lipid IVA = lipid IIA + di-trans,octa-cis-undecaprenyl phosphate.. Its pathway is lipopolysaccharide metabolism; 4-amino-4-deoxy-beta-L-arabinose-lipid A biosynthesis. Catalyzes the transfer of the L-Ara4N moiety of the glycolipid undecaprenyl phosphate-alpha-L-Ara4N to lipid A. The modified arabinose is attached to lipid A and is required for resistance to polymyxin and cationic antimicrobial peptides. The chain is Undecaprenyl phosphate-alpha-4-amino-4-deoxy-L-arabinose arabinosyl transferase 1 from Pseudomonas fluorescens (strain Pf0-1).